The sequence spans 331 residues: Small ribosomal subunit protein uS2 (331 aa).

The protein belongs to the universal ribosomal protein uS2 family.

This is Small ribosomal subunit protein uS2 from Bradyrhizobium diazoefficiens (strain JCM 10833 / BCRC 13528 / IAM 13628 / NBRC 14792 / USDA 110).